A 155-amino-acid polypeptide reads, in one-letter code: Ribonuclease H (155 aa).

The RNase H type-1 domain maps to 4–145 (QQKVVEIYTD…ADALARKAIT (142 aa)). Residues aspartate 13, glutamate 51, aspartate 73, and aspartate 137 each contribute to the Mg(2+) site.

The protein belongs to the RNase H family. In terms of assembly, monomer. Requires Mg(2+) as cofactor.

The protein resides in the cytoplasm. The enzyme catalyses Endonucleolytic cleavage to 5'-phosphomonoester.. In terms of biological role, endonuclease that specifically degrades the RNA of RNA-DNA hybrids. In Bartonella quintana (strain Toulouse) (Rochalimaea quintana), this protein is Ribonuclease H.